The primary structure comprises 930 residues: Protocadherin gamma-B6 (930 aa).

Residues 1 to 30 form the signal peptide; the sequence is MGGSCAQRRRAGPRQVLFPLLLPLFYPTLS. 6 Cadherin domains span residues 31 to 133, 134 to 242, 243 to 347, 348 to 452, 453 to 562, and 570 to 675; these read EPIR…APQF, DKKE…PPVF, SRDE…SPEI, IITS…APVF, DQTS…APRV, and DGSA…LPDL. Residues 31-691 lie on the Extracellular side of the membrane; the sequence is EPIRYSIPEE…SDPQAELQFY (661 aa). N-linked (GlcNAc...) asparagine glycans are attached at residues N304, N419, and N545. A helical membrane pass occupies residues 692 to 712; it reads LVVALALISVLFLLAVILAIA. The Cytoplasmic portion of the chain corresponds to 713–930; it reads LRLRRSLSPA…KKKSGKKEKK (218 aa). Disordered regions lie at residues 791-839 and 900-930; these read PHGG…WPNN and ATLTNAAGKRDGKAPAGGNGNKKKSGKKEKK. Over residues 800 to 839 the composition is skewed to polar residues; the sequence is HPETLTSQAPPNTDWRFSQAQRPGTSGSQNGDDTGTWPNN. Residues 920 to 930 show a composition bias toward basic residues; it reads NKKKSGKKEKK.

The protein localises to the cell membrane. In terms of biological role, potential calcium-dependent cell-adhesion protein. May be involved in the establishment and maintenance of specific neuronal connections in the brain. This chain is Protocadherin gamma-B6 (PCDHGB6), found in Homo sapiens (Human).